A 156-amino-acid polypeptide reads, in one-letter code: Arginine repressor (156 aa).

Belongs to the ArgR family.

It localises to the cytoplasm. Its pathway is amino-acid biosynthesis; L-arginine biosynthesis [regulation]. Regulates arginine biosynthesis genes. The polypeptide is Arginine repressor (Salmonella agona (strain SL483)).